Consider the following 438-residue polypeptide: Sphingomyelinase phosphodiesterase D (438 aa).

Residues 1–17 (MKIILILVLVLVVSINA) form the signal peptide. Zn(2+) contacts are provided by D27 and H29. N-linked (GlcNAc...) asparagine glycosylation is present at N40. 2 residues coordinate Zn(2+): D111 and N148. A glycan (N-linked (GlcNAc...) asparagine) is linked at N160. H247 provides a ligand contact to Zn(2+). An N-linked (GlcNAc...) asparagine glycan is attached at N271. The Zn(2+) site is built by H287 and H289. N-linked (GlcNAc...) asparagine glycosylation is found at N338 and N359.

This sequence belongs to the acid sphingomyelinase family. Zn(2+) serves as cofactor.

Its subcellular location is the secreted. The protein is Sphingomyelinase phosphodiesterase D (sgmD) of Dictyostelium discoideum (Social amoeba).